A 171-amino-acid polypeptide reads, in one-letter code: UPF0303 protein YPN_2129 (171 aa).

It belongs to the UPF0303 family.

The chain is UPF0303 protein YPN_2129 from Yersinia pestis bv. Antiqua (strain Nepal516).